Reading from the N-terminus, the 87-residue chain is Small ribosomal subunit protein bS20 (87 aa).

Belongs to the bacterial ribosomal protein bS20 family.

Binds directly to 16S ribosomal RNA. The polypeptide is Small ribosomal subunit protein bS20 (Rhizorhabdus wittichii (strain DSM 6014 / CCUG 31198 / JCM 15750 / NBRC 105917 / EY 4224 / RW1) (Sphingomonas wittichii)).